Consider the following 372-residue polypeptide: CXADR-like membrane protein (372 aa).

An N-terminal signal peptide occupies residues 1-17 (MSLFFLWLVTYYVGTLG). Ig-like C2-type domains follow at residues 18–126 (THTE…VILK) and 134–223 (PKCE…VRVT). Topologically, residues 18–234 (THTEIKRVAE…QYVQSIGMVA (217 aa)) are extracellular. 2 cysteine pairs are disulfide-bonded: cysteine 34–cysteine 110 and cysteine 152–cysteine 207. Residues asparagine 73 and asparagine 196 are each glycosylated (N-linked (GlcNAc...) asparagine). A helical transmembrane segment spans residues 235–255 (GAVTGIVAGALLIFLLIWLLI). Over 256–372 (RRKSKERYEE…PSQSRAFQTV (117 aa)) the chain is Cytoplasmic. Positions 263–280 (YEEEDRPNEIREDAEAPR) are enriched in basic and acidic residues. Positions 263–372 (YEEEDRPNEI…PSQSRAFQTV (110 aa)) are disordered. Composition is skewed to low complexity over residues 287 to 313 (SSSS…ASRS) and 352 to 361 (LTKAETTLST). A compositionally biased stretch (polar residues) spans 362–372 (MPSQSRAFQTV).

Predominantly expressed in the white adipose tissue.

The protein resides in the cell junction. It is found in the tight junction. It localises to the cell membrane. Its function is as follows. May be involved in the cell-cell adhesion. May play a role in adipocyte differentiation and development of obesity. Is required for normal small intestine development. The polypeptide is CXADR-like membrane protein (Clmp) (Rattus norvegicus (Rat)).